Consider the following 505-residue polypeptide: 2,3-bisphosphoglycerate-independent phosphoglycerate mutase (505 aa).

2 residues coordinate Mn(2+): Asp11 and Ser61. Ser61 functions as the Phosphoserine intermediate in the catalytic mechanism. Residues His122, 152–153 (RD), Arg184, Arg190, 258–261 (RPDR), and Lys331 contribute to the substrate site. Asp396, His400, Asp437, His438, and His455 together coordinate Mn(2+).

It belongs to the BPG-independent phosphoglycerate mutase family. Monomer. Mn(2+) serves as cofactor.

The enzyme catalyses (2R)-2-phosphoglycerate = (2R)-3-phosphoglycerate. Its pathway is carbohydrate degradation; glycolysis; pyruvate from D-glyceraldehyde 3-phosphate: step 3/5. Functionally, catalyzes the interconversion of 2-phosphoglycerate and 3-phosphoglycerate. This chain is 2,3-bisphosphoglycerate-independent phosphoglycerate mutase, found in Mesomycoplasma hyopneumoniae (strain 7448) (Mycoplasma hyopneumoniae).